Reading from the N-terminus, the 263-residue chain is Indolethylamine N-methyltransferase (263 aa).

Lys-13 carries the post-translational modification N6-succinyllysine. S-adenosyl-L-methionine contacts are provided by residues Tyr-20, Tyr-25, 63-64, Tyr-69, Asp-85, and Asn-90; that span reads GS. Lys-96 carries the post-translational modification N6-succinyllysine. S-adenosyl-L-methionine is bound by residues 142–143 and Leu-163; that span reads DA.

Belongs to the class I-like SAM-binding methyltransferase superfamily. NNMT/PNMT/TEMT family. As to quaternary structure, monomer. Highly expressed in lung, also detected in liver and at very low levels in brain.

The protein localises to the cytoplasm. The catalysed reaction is a tertiary amine + S-adenosyl-L-methionine = a methylated tertiary amine + S-adenosyl-L-homocysteine + H(+). It catalyses the reaction a secondary amine + S-adenosyl-L-methionine = a methylated secondary amine + S-adenosyl-L-homocysteine + H(+). It carries out the reaction a primary amine + S-adenosyl-L-methionine = a methylated primary amine + S-adenosyl-L-homocysteine + H(+). The enzyme catalyses dimethyl sulfide + S-adenosyl-L-methionine = trimethylsulfonium + S-adenosyl-L-homocysteine. In terms of biological role, catalyzes the N-methylation of tryptamine and structurally related compounds. Functions as a thioether S-methyltransferase and is active with a variety of thioethers and the corresponding selenium and tellurium compounds, including 3-methylthiopropionaldehyde, dimethyl selenide, dimethyl telluride, 2-methylthioethylamine, 2-methylthioethanol, methyl-n-propyl sulfide and diethyl sulfide. Plays an important role in the detoxification of selenium compounds. The sequence is that of Indolethylamine N-methyltransferase (INMT) from Oryctolagus cuniculus (Rabbit).